Here is a 487-residue protein sequence, read N- to C-terminus: Arginine ADP-riboxanase CopC (487 aa).

Polar residues predominate over residues 1–12; it reads MRVENHSPSLSK. The interval 1 to 27 is disordered; it reads MRVENHSPSLSKLNPPEAGSGDPTAIG. NAD(+) contacts are provided by His-137, Gln-138, Ser-139, Leu-143, Ala-150, Ala-152, Asn-154, and Leu-157. Position 137 (His-137) interacts with nicotinamide. Residues Ser-139 and Leu-143 each coordinate ADP-D-ribose. ADP-D-ribose-binding residues include Ala-152, Asn-154, Leu-157, Gly-166, Asn-167, Thr-168, and Phe-183. Asn-167 is a binding site for NAD(+). Position 183 (Phe-183) interacts with NAD(+). Residues Phe-183, Phe-184, His-202, and Phe-207 each coordinate nicotinamide. His-202 provides a ligand contact to NAD(+). The ADP-D-ribose site is built by Phe-207 and Asp-230. NAD(+)-binding residues include Asp-230 and Glu-325. Glu-325 provides a ligand contact to nicotinamide. Residue Glu-325 is part of the active site. ANK repeat units lie at residues 368 to 398 and 444 to 476; these read DAVT…EAGD and SGET…LLSE.

It belongs to the OspC family. Interacts with host calmodulin (CALM1, CALM2 and/or CALM3); specifically interacts with the apo form of calmodulin and calmodulin-binding is required to mediate arginine ADP-riboxanation of host caspases.

It localises to the secreted. Its subcellular location is the host cytoplasm. The catalysed reaction is L-arginyl-[protein] + NAD(+) = ADP-riboxanated L-argininyl-[protein] + nicotinamide + NH4(+) + H(+). Interaction with host calmodulin (CALM1, CALM2 and/or CALM3) is required to mediate arginine ADP-riboxanation of host caspases. Functionally, ADP-riboxanase effector that inhibits host cell programmed cell death. Acts by mediating arginine ADP-riboxanation of host caspases (CASP3, CASP7, CASP8 and CASP9), blocking their processing and activation. ADP-riboxanation of host apoptotic caspases (CASP3, CASP7, CASP8 and CASP9) prevents their activation, thereby inhibiting host cell apoptosis. ADP-riboxanation of host CASP8 also inhibits host cell necroptosis. ADP-riboxanation of host CASP3 also abolishes pyroptosis by preventing its ability to cleave GSDME. May also able to inactivate CASP4/CASP11, blocking inhibiting LPS-induced pyroptosis; however this activity is unsure in vivo. ADP-riboxanation takes place in several steps: CopC first binds host caspases and NAD(+); NAD(+) is hydrolyzed to nicotinamide and ADP-D-ribose. CopC then transfers the ADP-D-ribose to the modified arginine of caspases and forms the ADP-D-ribose-deacylization on arginine, leading to deamination to remove one N-omega group on target arginine. The polypeptide is Arginine ADP-riboxanase CopC (Chromobacterium violaceum (strain ATCC 12472 / DSM 30191 / JCM 1249 / CCUG 213 / NBRC 12614 / NCIMB 9131 / NCTC 9757 / MK)).